Consider the following 1013-residue polypeptide: MCAQDAFQTQRSQLVELLVSGSLEGFESILDRLLSREVLSWEDYEGLSLVGQPISHLARRLLDTIWNKGTWGCEQLTAAVREAQADSQPPELPSSWDPHSPHPARDLQSHRPAIVRRLYGHVEGVLDLTQQRGFISQYETDEIRRPIFTSSQRARRLLDLATVKANGLAAFLLQCIQELPVPLALPFEDAACKKYVSKLRTVISAQSRFLSTYDGAENLCLEEVYTENVLEIQMEVGMAGPSQQSPTTLGLEELFSTRDHFNKEADTVLVVGEAGSGKSTLLQQLHLLWASGRAFQEFLFVFPFSCRQLQCLVKPLSMRTLLFEHCCWPDLGPQDVFQVLLDHPERILLTFDGFDEFRFRFTDQERHCCPTAPTSVQSLLFNLLQGNLLKNARKVLTSRPSAVSASLRKHVRTELSLKGFSEEGIELYLRKRHREPGVADRLLCLLRATSALHGLCHLPVFSWMVSKCHEELLLQGRGSPKTTTDMYLLILRHFLLHASPLPLATHGLGPSLIQGRLPTLLHLGRLALWGLGTCCYVFSAKQLQAAHVDSEDLSLGFLVLAKRVVPGSTAPLEFLHITFQCFFAAFYLALSADTPPSSLRHLFQDHRPESSPLARVLPKLFLRGSRCREGSVAALLQGAEPHNLQITGAFLAGLLSQEHRSLLAECQASETALLRRWDCVRRCLTRSLREHFRSIPPALPGEAKSMHALPGFLWLIRSLYEMQEERLAREAVCRLNVGHLKLTFCGVGPAECAALAFVLRHLRRPVALQLDHNSVGDIGVEQLLPCLGVCKALYLRDNNISDRGICKLVEHALRCEQLQKLALFNNKLTDGCAHSMARLLACKQNFLALRLGNNHITAAGAEVLAQGLRTNNSLQFLGFWGNQVGDEGAQALAAALGDHQSLRWLSLVGNNIGSVGAQALALMLEKNMALEELCLEENHVQDEGVCFLAKGLARNSSLKVLKLSNNHISSLGAEALLRALEKNDTILEVWLRGNTFSPEEIEKLSHQDTRLLL.

2 CARD domains span residues 1–95 and 99–191; these read MCAQ…LPSS and HSPH…EDAA. The ATG16L1-binding motif signature appears at 36-50; the sequence is REVLSWEDYEGLSLV. The interval 82 to 106 is disordered; that stretch reads EAQADSQPPELPSSWDPHSPHPARD. ADP is bound by residues Thr212, Tyr225, Thr226, Gly275, Ser276, Gly277, Lys278, Ser279, and Thr280. The required for CARD9 binding stretch occupies residues 214–247; sequence DGAENLCLEEVYTENVLEIQMEVGMAGPSQQSPT. One can recognise an NACHT domain in the interval 266 to 591; the sequence is DTVLVVGEAG…FFAAFYLALS (326 aa). 272 to 279 serves as a coordination point for ATP; the sequence is GEAGSGKS. Cys368 carries the S-palmitoyl cysteine lipid modification. His576 contributes to the ADP binding site. LRR repeat units lie at residues 764–785, 789–809, 817–838, 845–866, 873–893, 901–922, 929–949, 957–978, and 985–1008; these read RPVA…QLLP, VCKA…CKLV, QLQK…SMAR, NFLA…VLAQ, SLQF…QALA, SLRW…ALAL, ALEE…CFLA, SLKV…ALLR, and TILE…SHQD.

This sequence belongs to the NOD1-NOD2 family. In terms of assembly, homooligomer: homooligomerizes following muramyl dipeptide (MDP)-binding, promoting RIPK2 recruitment. Interacts (via CARD domain) with RIPK2 (via CARD domain). Following RIPK2 recruitment, RIPK2 homooligomerizes via its CARD domain and forms long filaments named RIPosomes. Interacts (via CARD domain) with ubiquitin; inhibiting interaction with RIPK2. Component of a signaling complex consisting of ARHGEF2, NOD2 and RIPK2. Interacts with ANKRD17 (via N-terminus). Interacts with HSPA1A; the interaction enhances NOD2 stability. Interacts (via both CARD domains) with HSP90; the interaction enhances NOD2 stability. Interacts (via CARD domain) with SOCS3; the interaction promotes NOD2 degradation. Interacts (via CARD domain) with ERBIN; the interaction inhibits activation of NOD2. Interacts with MAPKBP1; the interaction is enhanced in the presence of muramyl dipeptide (MDP) and inhibits NOD2 homooligomerization and activation. Interacts with INAVA; the interaction takes place upon Pattern recognition receptor (PRR) stimulation. Interacts (via NACHT domain) with CARD9. Interacts (via CARD domain) with CASP1; this interaction leads to IL1B processing. Also interacts with CASP4. Interacts with NLRP1; this interaction is enhanced in the presence of muramyl dipeptide (MDP) and leads to increased IL1B release. Interacts with NLRP12; this interaction promotes degradation of NOD2 through the ubiquitin-proteasome pathway. Interacts with ANKHD1, C10orf67, CHMP5, DOCK7, ENTR1, KRT15, LDOC1, PPP1R12C, PPP2R3B, TRIM41 and VIM. Interacts with MAVS; interaction takes place following single-stranded RNA (ssRNA)-binding. Interacts with ATG16L1. Interacts with IRGM; promoting IRGM 'Lys-63'-linked polyubiquitination, which is required for interactions with the core autophagy factors. Palmitoylated by ZDHHC5; palmitoylation is required for proper recruitment to the bacterial entry site and hence for proper signaling upon cognate peptidoglycan detection. Palmitoylation promotes localization to the cell membrane. Palmitoylation protects from SQSTM1/p62-dependent autophagic degradation. In terms of processing, polyubiquitinated by TRIM27, leading to proteasome-mediated degradation. Polyubiquitinated and degraded following muramyl dipeptide (MDP) stimulation, conferring MDP tolerance and preventing septic shock. Post-translationally, degraded via selective autophagy following interaction with IRGM. IRGM promotes NOD2-RIPK2 RIPosome recruitment to autophagosome membranes, promoting their SQSTM1/p62-dependent autophagic degradation. O-glycosylated by OGT, O-GlcNAcylation increases protein stability.

It localises to the cell membrane. The protein localises to the basolateral cell membrane. The protein resides in the cytoplasm. Its subcellular location is the mitochondrion. With respect to regulation, ADP-binding promotes an inactive closed conformation. Its function is as follows. Pattern recognition receptor (PRR) that detects bacterial peptidoglycan fragments and other danger signals and plays an important role in gastrointestinal immunity. Specifically activated by muramyl dipeptide (MDP), a fragment of bacterial peptidoglycan found in every bacterial peptidoglycan type. NOD2 specifically recognizes and binds 6-O-phospho-MDP, the phosphorylated form of MDP, which is generated by NAGK. 6-O-phospho-MDP-binding triggers oligomerization that facilitates the binding and subsequent activation of the proximal adapter receptor-interacting RIPK2. Following recruitment, RIPK2 undergoes 'Met-1'- (linear) and 'Lys-63'-linked polyubiquitination by E3 ubiquitin-protein ligases XIAP, BIRC2, BIRC3 and the LUBAC complex, becoming a scaffolding protein for downstream effectors, triggering activation of the NF-kappa-B and MAP kinases signaling. This in turn leads to the transcriptional activation of hundreds of genes involved in immune response. Its ability to detect bacterial MDP plays a central role in maintaining the equilibrium between intestinal microbiota and host immune responses to control inflammation. An imbalance in this relationship results in dysbiosis, whereby pathogenic bacteria prevail on commensals, causing damage in the intestinal epithelial barrier as well as allowing bacterial invasion and inflammation. Acts as a regulator of appetite by sensing MDP in a subset of brain neurons: microbiota-derived MDP reach the brain, where they bind and activate NOD2 in inhibitory hypothalamic neurons, decreasing neuronal activity, thereby regulating satiety and body temperature. NOD2-dependent MDP-sensing of bacterial cell walls in the intestinal epithelial compartment contributes to sustained postnatal growth upon undernutrition. Also plays a role in antiviral response by acting as a sensor of single-stranded RNA (ssRNA) from viruses: upon ssRNA-binding, interacts with MAVS, leading to activation of interferon regulatory factor-3/IRF3 and expression of type I interferon. Also acts as a regulator of autophagy in dendritic cells via its interaction with ATG16L1, possibly by recruiting ATG16L1 at the site of bacterial entry. NOD2 activation in the small intestine crypt also contributes to intestinal stem cells survival and function: acts by promoting mitophagy via its association with ATG16L1. In addition to its main role in innate immunity, also regulates the adaptive immune system by acting as regulator of helper T-cell and regulatory T-cells (Tregs). Besides recognizing pathogens, also involved in the endoplasmic reticulum stress response: acts by sensing and binding to the cytosolic metabolite sphingosine-1-phosphate generated in response to endoplasmic reticulum stress, initiating an inflammation process that leads to activation of the NF-kappa-B and MAP kinases signaling. May also be involved in NLRP1 activation following activation by MDP, leading to CASP1 activation and IL1B release in macrophages. This Bos taurus (Bovine) protein is Nucleotide-binding oligomerization domain-containing protein 2 (NOD2).